The following is a 518-amino-acid chain: 12S seed storage globulin 1 (518 aa).

The N-terminal stretch at 1 to 24 (MATTRFPSLLFYSCIFLLCNGSMA) is a signal peptide. 2 disulfides stabilise this stretch: Cys45–Cys78 and Cys121–Cys324. A Cupin type-1 1 domain is found at 50 to 240 (LQAFEPLRQV…ALGISQQAAQ (191 aa)). Positions 281–295 (QSQQEQSTQYQVGQS) are enriched in low complexity. Residues 281–311 (QSQQEQSTQYQVGQSPQYQEGQSTQYQSGQS) form a disordered region. Over residues 296 to 311 (PQYQEGQSTQYQSGQS) the composition is skewed to polar residues. The Cupin type-1 2 domain occupies 330–479 (QNIENPKRAD…AYRISRQESQ (150 aa)). The disordered stretch occupies residues 496-518 (FAQTGSQSYQDEGESSSTEKASE).

It belongs to the 11S seed storage protein (globulins) family. As to quaternary structure, hexamer; each subunit is composed of an acidic and a basic chain derived from a single precursor and linked by a disulfide bond.

In terms of biological role, this is a seed storage protein. The protein is 12S seed storage globulin 1 of Avena sativa (Oat).